The following is a 297-amino-acid chain: MSDIAIIDPHFHLWDLETNYYPWLSDGVKPSAFGDYTAINKTYLIEDFLADAKNQNLVKAVHLDVGFDPTNPAGETKWLQGVADKHGFPHGIVGYADFRKPDVGDLLDEHMQYANFRGIRQSMNFHTDGAKTYLNEPEVSRTPEWRQGFKELARRGLSYDLQLYYWQMEEFLELARDFPDVQIILNHTGMQVDGPSHFEGWRKAMKTLAQAPNVACKISGLGMGNWNWTSESIRPYVEEAIAAFGVDRAMFASNFPVDKLFSSYDAIWNAFKKITVGFSVSERSALFHDNAATFYRV.

Belongs to the metallo-dependent hydrolases superfamily.

This is an uncharacterized protein from Sinorhizobium fredii (strain NBRC 101917 / NGR234).